Reading from the N-terminus, the 379-residue chain is Homoserine O-succinyltransferase (379 aa).

The 310-residue stretch at 51–360 (NAVLICHALS…DSPYGHDAFL (310 aa)) folds into the AB hydrolase-1 domain. Ser-157 acts as the Nucleophile in catalysis. Arg-227 is a binding site for substrate. Catalysis depends on residues Asp-323 and His-356. Position 357 (Asp-357) interacts with substrate.

The protein belongs to the AB hydrolase superfamily. MetX family. Homodimer.

The protein localises to the cytoplasm. It catalyses the reaction L-homoserine + succinyl-CoA = O-succinyl-L-homoserine + CoA. Its pathway is amino-acid biosynthesis; L-methionine biosynthesis via de novo pathway; O-succinyl-L-homoserine from L-homoserine: step 1/1. In terms of biological role, transfers a succinyl group from succinyl-CoA to L-homoserine, forming succinyl-L-homoserine. The polypeptide is Homoserine O-succinyltransferase (Pseudomonas putida (strain GB-1)).